A 377-amino-acid chain; its full sequence is Homoserine O-succinyltransferase (377 aa).

An AB hydrolase-1 domain is found at 50-359; that stretch reads NAVLVCHALS…SSHGHDSFLM (310 aa). S156 serves as the catalytic Nucleophile. R226 contributes to the substrate binding site. Catalysis depends on residues D321 and H354. Position 355 (D355) interacts with substrate.

This sequence belongs to the AB hydrolase superfamily. MetX family. In terms of assembly, homodimer.

The protein resides in the cytoplasm. It carries out the reaction L-homoserine + succinyl-CoA = O-succinyl-L-homoserine + CoA. It functions in the pathway amino-acid biosynthesis; L-methionine biosynthesis via de novo pathway; O-succinyl-L-homoserine from L-homoserine: step 1/1. In terms of biological role, transfers a succinyl group from succinyl-CoA to L-homoserine, forming succinyl-L-homoserine. This is Homoserine O-succinyltransferase from Nitrosospira multiformis (strain ATCC 25196 / NCIMB 11849 / C 71).